The following is a 333-amino-acid chain: Protoheme IX farnesyltransferase (333 aa).

Transmembrane regions (helical) follow at residues 64–84 (LICT…LNCL), 110–130 (TVFL…VSGV), 133–153 (LAAG…TVIL), 161–181 (IVFG…AATG), 189–209 (WLFG…AILL), 246–266 (IMGV…LLPF), and 287–307 (AKSL…LLLI).

This sequence belongs to the UbiA prenyltransferase family. Protoheme IX farnesyltransferase subfamily.

It localises to the cell inner membrane. It catalyses the reaction heme b + (2E,6E)-farnesyl diphosphate + H2O = Fe(II)-heme o + diphosphate. The protein operates within porphyrin-containing compound metabolism; heme O biosynthesis; heme O from protoheme: step 1/1. Its function is as follows. Converts heme B (protoheme IX) to heme O by substitution of the vinyl group on carbon 2 of heme B porphyrin ring with a hydroxyethyl farnesyl side group. The chain is Protoheme IX farnesyltransferase from Prochlorococcus marinus (strain AS9601).